Here is a 480-residue protein sequence, read N- to C-terminus: Immune evasion protein OPG047 (480 aa).

Residues 10-90 enclose the BTB domain; the sequence is CKNILALSMT…SYTGKVYIDS (81 aa). Residues 125–223 enclose the BACK domain; the sequence is CVECYMMGIE…NYLSPRGINN (99 aa). 5 Kelch repeats span residues 273–319, 320–363, 365–408, 410–447, and 448–480; these read VVYL…PANN, KLYV…SINN, IYVM…VFGR, LFLV…IVDN, and KLLL…WDGK.

It belongs to the orthopoxvirus OPG047 family.

Might have a role in the suppression of host immune response. The polypeptide is Immune evasion protein OPG047 (OPG047) (Vaccinia virus (strain Copenhagen) (VACV)).